The following is a 321-amino-acid chain: Beta-1,3-N-acetylglucosaminyltransferase manic fringe (321 aa).

The Cytoplasmic portion of the chain corresponds to 1–7; it reads MQCRLPR. Residues 8 to 27 form a helical; Signal-anchor for type II membrane protein membrane-spanning segment; that stretch reads GLAGALLTLLCMGLLCLRYH. The Lumenal segment spans residues 28 to 321; the sequence is LNLSPQRVQE…TPWCPQLGAR (294 aa). Arg70 serves as a coordination point for substrate. A glycan (N-linked (GlcNAc...) asparagine) is linked at Asn109. Cystine bridges form between Cys110/Cys121 and Cys139/Cys202. Position 143 (Asp143) interacts with substrate. Mn(2+) is bound at residue Asp144. N-linked (GlcNAc...) asparagine glycosylation is present at Asn185. Asp232 is a catalytic residue. His256 is a binding site for Mn(2+). Cysteines 306 and 315 form a disulfide.

Belongs to the glycosyltransferase 31 family. Mn(2+) is required as a cofactor.

It is found in the golgi apparatus membrane. The enzyme catalyses 3-O-(alpha-L-fucosyl)-L-threonyl-[EGF-like domain protein] + UDP-N-acetyl-alpha-D-glucosamine = 3-O-(N-acetyl-beta-D-glucosaminyl-(1-&gt;3)-alpha-L-fucosyl)-L-threonyl-[EGF-like domain protein] + UDP + H(+). It carries out the reaction 3-O-(alpha-L-fucosyl)-L-seryl-[EGF-like domain protein] + UDP-N-acetyl-alpha-D-glucosamine = 3-O-(N-acetyl-beta-D-glucosaminyl-(1-&gt;3)-alpha-L-fucosyl)-L-seryl-[EGF-like domain protein] + UDP + H(+). Glycosyltransferase that initiates the elongation of O-linked fucose residues attached to EGF-like repeats in the extracellular domain of Notch molecules. Modulates NOTCH1 activity by modifying O-fucose residues at specific EGF-like domains resulting in inhibition of NOTCH1 activation by JAG1 and enhancement of NOTCH1 activation by DLL1 via an increase in its binding to DLL1. In Pan troglodytes (Chimpanzee), this protein is Beta-1,3-N-acetylglucosaminyltransferase manic fringe (MFNG).